The chain runs to 60 residues: Cytotoxin SP15d (60 aa).

Disulfide bonds link C3–C21, C14–C38, C42–C53, and C54–C59.

It belongs to the three-finger toxin family. Short-chain subfamily. Type IA cytotoxin sub-subfamily. Monomer in solution; Homodimer and oligomer in the presence of negatively charged lipids forming a pore with a size ranging between 20 and 30 Angstroms. Expressed by the venom gland.

The protein resides in the secreted. Its subcellular location is the target cell membrane. Shows cytolytic activity on many different cells by forming pore in lipid membranes. In vivo, increases heart rate or kills the animal by cardiac arrest. In addition, it binds to heparin with high affinity, interacts with Kv channel-interacting protein 1 (KCNIP1) in a calcium-independent manner, and binds to integrin alpha-V/beta-3 (ITGAV/ITGB3) with moderate affinity. The protein is Cytotoxin SP15d of Naja atra (Chinese cobra).